Here is an 825-residue protein sequence, read N- to C-terminus: Probable phosphoketolase (825 aa).

This sequence belongs to the XFP family. Thiamine diphosphate serves as cofactor.

This Schizosaccharomyces pombe (strain 972 / ATCC 24843) (Fission yeast) protein is Probable phosphoketolase.